Consider the following 330-residue polypeptide: Aspartate--ammonia ligase (330 aa).

This sequence belongs to the class-II aminoacyl-tRNA synthetase family. AsnA subfamily.

The protein resides in the cytoplasm. It catalyses the reaction L-aspartate + NH4(+) + ATP = L-asparagine + AMP + diphosphate + H(+). It functions in the pathway amino-acid biosynthesis; L-asparagine biosynthesis; L-asparagine from L-aspartate (ammonia route): step 1/1. This chain is Aspartate--ammonia ligase, found in Shigella boydii serotype 18 (strain CDC 3083-94 / BS512).